The primary structure comprises 311 residues: Lipoyl synthase (311 aa).

The [4Fe-4S] cluster site is built by Cys55, Cys60, Cys66, Cys81, Cys85, Cys88, and Ser292. Positions 67-281 (WEDREATFLI…ARFAEGLGFA (215 aa)) constitute a Radical SAM core domain.

This sequence belongs to the radical SAM superfamily. Lipoyl synthase family. [4Fe-4S] cluster serves as cofactor.

It localises to the cytoplasm. It catalyses the reaction [[Fe-S] cluster scaffold protein carrying a second [4Fe-4S](2+) cluster] + N(6)-octanoyl-L-lysyl-[protein] + 2 oxidized [2Fe-2S]-[ferredoxin] + 2 S-adenosyl-L-methionine + 4 H(+) = [[Fe-S] cluster scaffold protein] + N(6)-[(R)-dihydrolipoyl]-L-lysyl-[protein] + 4 Fe(3+) + 2 hydrogen sulfide + 2 5'-deoxyadenosine + 2 L-methionine + 2 reduced [2Fe-2S]-[ferredoxin]. Its pathway is protein modification; protein lipoylation via endogenous pathway; protein N(6)-(lipoyl)lysine from octanoyl-[acyl-carrier-protein]: step 2/2. Catalyzes the radical-mediated insertion of two sulfur atoms into the C-6 and C-8 positions of the octanoyl moiety bound to the lipoyl domains of lipoate-dependent enzymes, thereby converting the octanoylated domains into lipoylated derivatives. This is Lipoyl synthase from Mycobacterium bovis (strain ATCC BAA-935 / AF2122/97).